The sequence spans 184 residues: Inactive cytochrome P450 monooxygenase lolP2 (184 aa).

Residues 10–30 form a helical membrane-spanning segment; sequence GIVWLTVAAIAISYILQSSFL. Residues 161-184 are disordered; it reads RRTRGSRPRSRPRWMPARWSRSSP. Residues 163-172 show a composition bias toward basic residues; sequence TRGSRPRSRP. Residues 173–184 are compositionally biased toward low complexity; it reads RWMPARWSRSSP.

This sequence belongs to the cytochrome P450 family.

It localises to the membrane. Cytochrome P450 monooxygenase; part of the gene cluster that mediates the biosynthesis of loline alkaloids, potent insecticidal agents composed of a pyrrolizidine ring system and an uncommon ether bridge linking carbons 2 and 7. Lolines are structurally differentiated by the various modifications of the L-amino group and include norloline, loline, N-methylloline, N-acetylloline, N-acetylnorloline, and N-formylloline. The first committed step is the condensation of O-acetyl-L-homoserine (derived from L-aspartic acid) and L-proline, probably catalyzed by the gamma-type pyridoxal 5'-phosphate(PLP)-dependent enzyme lolC, to give the diamino diacid, NACPP. Ensuing cyclization, decarboxylation, and acetylation steps yield 1-exo-acetamidopyrrolizidine (AcAP). LolO is required for installation of the ether bridge upon the pathway intermediate, 1-exo-acetamidopyrrolizidine (AcAP). In sequential 2-oxoglutarate- and O(2)-consuming steps, lolO removes hydrogens from C2 and C7 of AcAP to form both carbon-oxygen bonds in N-acetylnorloline (NANL), the precursor to all other lolines. The enzymes lolD, lolE, lolF and lolT have also been proposed to be involved in the ether-bridge installation. Further processing of the exocyclic moiety of NANL by fungal N-acetamidase (LolN), methyltransferase (LolM), and cytochrome P450 (LolP) enzymes, with occasional involvement of a plant acetyltransferase, generates the other known lolines. LolN transforms NANL to norlonine which is monomethylated and dimethylated to respectively lonine and N-methyllonine (NML) by lolM. LolP catalyzes hydroxylation of the methyl group in N-methylloline (NML) and further oxygenation to N-formylloline (NFL). A plant acetyltransferase is responsible for the acetylation of loline to form N-acetylloline (NAL). LolA might interact with aspartate kinase to prevent feedback inhibition of its activity by these end products and thereby promote production of L-homoserine from L-aspartate. The sequence is that of Inactive cytochrome P450 monooxygenase lolP2 from Epichloe uncinata (Endophyte fungus).